The following is a 253-amino-acid chain: Toxin PezT (253 aa).

Position 39–46 (39–46 (GQSGAGKT)) interacts with ATP. Asp66 acts as the Proton acceptor in catalysis.

Belongs to the zeta toxin family. In terms of assembly, forms a PezA(2)PezT(2) heterotetramer. The heterotetramer is much more stable than either of the proteins alone, and a specific mechanism may be necessary to liberate the toxin.

The enzyme catalyses UDP-N-acetyl-alpha-D-glucosamine + ATP = UDP-N-acetyl-alpha-D-glucosamine 3'-phosphate + ADP + H(+). Functionally, toxic component of a type II toxin-antitoxin (TA) system. Phosphorylates UDP-N-acetyl-D-glucosamine (UNAG) on the 3'-hydroxyl group of the N-acetyl-D-glucosamine moiety, yielding UNAG-3P. UNAG-3P inhibits MurA, the first committed step in cell wall synthesis, which is then blocked. Upon expression in E.coli results in decreased cell growth and viability, followed 3 hours later by growth restoration; the toxic effect and phosphorylation of UNAG are neutralized by coexpression with cognate antitoxin PezA. A mutant lacking the last 11 residues is stably maintained in E.coli, unlike the wild-type which undergoes spontaneous mutation. Expression of the deletion mutant in rapidly growing liquid cultures leads to cell bulging, permeabilization and massive lysis by 1 hour. Cells that survive are not able to undergo cytokinesis. Expression in slowly growing cells leads to bulging but not lysis. Its function is as follows. Acts as a corepressor of its own operon with PezA; it is not clear if it binds DNA alone. This chain is Toxin PezT (pezT), found in Streptococcus pneumoniae serotype 4 (strain ATCC BAA-334 / TIGR4).